Consider the following 55-residue polypeptide: Ovomucoid (55 aa).

In terms of domain architecture, Kazal-like spans 5-55 (VDCSEHPKPACTLDYRPICGSDSKTYSNKCDFCNAVMDSNGTLTLSHFGKC). Cystine bridges form between Cys7-Cys37, Cys15-Cys34, and Cys23-Cys55. A glycan (N-linked (GlcNAc...) asparagine) is linked at Asn44.

The protein localises to the secreted. This Dacelo novaeguineae (Laughing kookaburra) protein is Ovomucoid.